The following is a 132-amino-acid chain: Small ribosomal subunit protein bS6 (132 aa).

Positions 99-132 are disordered; that stretch reads ASPMVKAKDERRGDRREDFANETADDADAGDSEE. The segment covering 104-117 has biased composition (basic and acidic residues); the sequence is KAKDERRGDRREDF. The span at 121 to 132 shows a compositional bias: acidic residues; that stretch reads TADDADAGDSEE.

Belongs to the bacterial ribosomal protein bS6 family.

In terms of biological role, binds together with bS18 to 16S ribosomal RNA. This is Small ribosomal subunit protein bS6 from Serratia proteamaculans (strain 568).